Consider the following 123-residue polypeptide: Large ribosomal subunit protein uL29 (123 aa).

It belongs to the universal ribosomal protein uL29 family. As to quaternary structure, component of the large ribosomal subunit.

Its subcellular location is the cytoplasm. Component of the large ribosomal subunit. The ribosome is a large ribonucleoprotein complex responsible for the synthesis of proteins in the cell. Plays an essential role in early embryonic development. May act as a haploinsufficient tumor suppressor. This Danio rerio (Zebrafish) protein is Large ribosomal subunit protein uL29 (rpl35).